The sequence spans 48 residues: ATP synthase protein 8 (48 aa).

N-formylmethionine is present on M1. Topologically, residues 1–12 are mitochondrial intermembrane; that stretch reads MPQLVPFYFTNQ. Residues 13 to 32 traverse the membrane as a helical segment; that stretch reads IFYGFASLSVIVYLFSIYIL. The Mitochondrial matrix portion of the chain corresponds to 33-48; sequence PHYLEIYVTRIFITKT.

As to quaternary structure, F-type ATP synthases have 2 components, the catalytic core F(1) and the membrane-embedded component F(0), linked together by a central stalk and a peripheral stalk. The central stalk, also called rotor shaft, is often seen as part of F(1). The peripheral stalk is seen as part of F(0). F(0) contains the membrane channel next to the rotor. F-type ATP synthases form dimers but each monomer functions independently in ATP generation. The dimer consists of 17 different polypeptides: ATP1 (subunit alpha, 3 molecules per monomer, part of F(1)), ATP2 (subunit beta, 3 copies per monomer, part of F(1)), ATP3 (subunit gamma, part of the central stalk), ATP4 (subunit b, part of the peripheral stalk), ATP5/OSCP (subunit 5/OSCP, part of the peripheral stalk), ATP6 (subunit a, part of the peripheral stalk), ATP7 (subunit d, part of the peripheral stalk), ATP8 (subunit 8, part of the peripheral stalk), OLI1 (subunit c, part of the rotor, 10 molecules per monomer), ATP14 (subunit h, part of the peripheral stalk), ATP15 (subunit epsilon, part of the central stalk), ATP16 (subunit delta, part of the central stalk), ATP17 (subunit f, part of the peripheral stalk), ATP18 (subunit i/j, part of the peripheral stalk), ATP19 (subunit k, dimer-specific, at interface between monomers), ATP20 (subunit g, at interface between monomers), TIM11 (subunit e, at interface between monomers).

The protein localises to the mitochondrion inner membrane. Functionally, mitochondrial membrane ATP synthase (F(1)F(0) ATP synthase or Complex V) produces ATP from ADP in the presence of a proton gradient across the membrane which is generated by electron transport complexes of the respiratory chain. F-type ATP synthases consist of two structural domains, F(1) - containing the extramembraneous catalytic core, and F(0) - containing the membrane proton channel, linked together by a central stalk and a peripheral stalk. During catalysis, ATP synthesis in the catalytic domain of F(1) is coupled via a rotary mechanism of the central stalk subunits to proton translocation. Part of the complex F(0) domain. Minor subunit located with subunit a/ATP6 in the membrane. In Yarrowia lipolytica (strain CLIB 122 / E 150) (Yeast), this protein is ATP synthase protein 8.